The chain runs to 458 residues: Phosphoglucosamine mutase (458 aa).

The active-site Phosphoserine intermediate is the serine 109. Mg(2+) contacts are provided by serine 109, aspartate 251, aspartate 253, and aspartate 255. Serine 109 is subject to Phosphoserine.

It belongs to the phosphohexose mutase family. Mg(2+) serves as cofactor. In terms of processing, activated by phosphorylation.

It carries out the reaction alpha-D-glucosamine 1-phosphate = D-glucosamine 6-phosphate. Its function is as follows. Catalyzes the conversion of glucosamine-6-phosphate to glucosamine-1-phosphate. The protein is Phosphoglucosamine mutase of Myxococcus xanthus (strain DK1622).